The following is a 35-amino-acid chain: Conotoxin Cal6.1d (35 aa).

Residues 1 to 8 (GLTRPSKR) constitute a propeptide that is removed on maturation. Cystine bridges form between Cys9–Cys25, Cys16–Cys29, and Cys24–Cys34.

It belongs to the conotoxin O1 superfamily. In terms of tissue distribution, expressed by the venom duct.

It localises to the secreted. Functionally, probable neurotoxin with unknown target. Possibly targets ion channels. This chain is Conotoxin Cal6.1d, found in Californiconus californicus (California cone).